Here is a 619-residue protein sequence, read N- to C-terminus: Kininogen-2 (619 aa).

Residues 1–18 (MKLITILFLCSRLLPSLT) form the signal peptide. Q19 is subject to Pyrrolidone carboxylic acid. The Cystatin kininogen-type 1 domain maps to 27-131 (CNDQDVFKAV…IQTCLITPAE (105 aa)). 9 disulfide bridges follow: C27/C589, C82/C93, C106/C125, C141/C144, C205/C217, C228/C247, C261/C264, C325/C337, and C348/C367. N-linked (GlcNAc...) asparagine glycosylation occurs at N87. Residue T136 is glycosylated (O-linked (GalNAc...) threonine; partial). One can recognise a Cystatin kininogen-type 2 domain in the interval 150–253 (TKSPDLEPVL…SQKCDLYPGE (104 aa)). N-linked (GlcNAc...) asparagine glycans are attached at residues N168 and N169. A glycan (N-linked (GlcNAc...) asparagine; partial) is linked at N197. The N-linked (GlcNAc...) asparagine glycan is linked to N204. In terms of domain architecture, Cystatin kininogen-type 3 spans 270–373 (VDSPDLEEAL…TVNCQPLGQT (104 aa)). Residue N280 is glycosylated (N-linked (GlcNAc...) asparagine). P380 carries the post-translational modification 4-hydroxyproline. The segment at 394–495 (EGSTTVSLPH…GKNNGKHYDW (102 aa)) is disordered. The O-linked (GalNAc...) serine glycan is linked to S396. T397 and T398 each carry an O-linked (GalNAc...) threonine glycan. 2 O-linked (GalNAc...) serine glycosylation sites follow: S400 and S404. The segment covering 442 to 490 (GHKHKHDQGHGHHRSHGLGHGHQKQHGLGHGHKHGHGHGKHKNKGKNNG) has biased composition (basic residues). A glycan (O-linked (GalNAc...) serine) is linked at S510. 6 O-linked (GalNAc...) threonine glycosylation sites follow: T518, T522, T534, T546, T551, and T568.

Bradykinin is released from kininogen by plasma kallikrein. As to expression, plasma.

The protein resides in the secreted. It is found in the extracellular space. In terms of biological role, (1) Kininogens are inhibitors of thiol proteases; (2) HMW-kininogen plays an important role in blood coagulation by helping to position optimally prekallikrein and factor XI next to factor XII; (3) HMW-kininogen inhibits the thrombin- and plasmin-induced aggregation of thrombocytes; (4) the active peptide bradykinin that is released from HMW-kininogen shows a variety of physiological effects: (4A) influence in smooth muscle contraction, (4B) induction of hypotension, (4C) natriuresis and diuresis, (4D) decrease in blood glucose level, (4E) it is a mediator of inflammation and causes (4E1) increase in vascular permeability, (4E2) stimulation of nociceptors (4E3) release of other mediators of inflammation (e.g. prostaglandins), (4F) it has a cardioprotective effect (directly via bradykinin action, indirectly via endothelium-derived relaxing factor action); (5) LMW-kininogen inhibits the aggregation of thrombocytes; (6) LMW-kininogen is in contrast to HMW-kininogen not involved in blood clotting. The chain is Kininogen-2 (KNG2) from Bos taurus (Bovine).